A 64-amino-acid polypeptide reads, in one-letter code: Temporin-ALg (64 aa).

The N-terminal stretch at 1-22 (MFTLKKSLLLLFFLGTINLSLC) is a signal peptide. Positions 23-46 (EQERNAEEERRDDLGERQAEVEKR) are excised as a propeptide. Leucine 62 is modified (leucine amide).

Belongs to the frog skin active peptide (FSAP) family. Temporin subfamily. As to expression, expressed by the skin glands.

The protein localises to the secreted. In terms of biological role, antimicrobial peptide with activity against Gram-positive and Gram-negative bacteria and against fungi. Has been tested against S.aureus (MIC=2.5 ug/mL), B.pumilus (MIC=2.5 ug/mL), B.cereus (MIC=30.0 ug/mL), E.coli (MIC=5.0 ug/mL), B.dysenteriae (MIC=10.0 ug/mL), A.cacoaceticus (MIC=30.0 ug/mL), P.aeruginosa (MIC=7.5 ug/mL) and C.albicans (MIC=1.25 ug/mL). Also shows a weak hemolytic activity. The protein is Temporin-ALg of Amolops loloensis (Lolokou Sucker Frog).